The sequence spans 103 residues: N(4)-acetylcytidine amidohydrolase (103 aa).

Positions 7–93 (TFFERFEQDI…VIAEIYPGLE (87 aa)) constitute an ASCH domain. The active-site Proton acceptor is the Lys-21. Thr-24 (nucleophile) is an active-site residue. Residue Glu-74 is the Proton donor of the active site.

This sequence belongs to the N(4)-acetylcytidine amidohydrolase family.

It carries out the reaction N(4)-acetylcytidine + H2O = cytidine + acetate + H(+). The catalysed reaction is N(4)-acetyl-2'-deoxycytidine + H2O = 2'-deoxycytidine + acetate + H(+). The enzyme catalyses N(4)-acetylcytosine + H2O = cytosine + acetate + H(+). Catalyzes the hydrolysis of N(4)-acetylcytidine (ac4C). The protein is N(4)-acetylcytidine amidohydrolase of Shewanella putrefaciens (strain CN-32 / ATCC BAA-453).